A 79-amino-acid chain; its full sequence is Sec-independent protein translocase protein TatA (79 aa).

Residues methionine 1–phenylalanine 21 form a helical membrane-spanning segment. Over residues glutamate 49–lysine 61 the composition is skewed to basic and acidic residues. A disordered region spans residues glutamate 49–alanine 79.

This sequence belongs to the TatA/E family. The Tat system comprises two distinct complexes: a TatABC complex, containing multiple copies of TatA, TatB and TatC subunits, and a separate TatA complex, containing only TatA subunits. Substrates initially bind to the TatABC complex, which probably triggers association of the separate TatA complex to form the active translocon.

It localises to the cell inner membrane. In terms of biological role, part of the twin-arginine translocation (Tat) system that transports large folded proteins containing a characteristic twin-arginine motif in their signal peptide across membranes. TatA could form the protein-conducting channel of the Tat system. The polypeptide is Sec-independent protein translocase protein TatA (Campylobacter jejuni subsp. doylei (strain ATCC BAA-1458 / RM4099 / 269.97)).